The chain runs to 227 residues: Cytochrome c oxidase subunit 2 (227 aa).

At 1 to 14 (MAYPMQLGFQDATS) the chain is on the mitochondrial intermembrane side. A helical transmembrane segment spans residues 15–45 (PIMEELLHFHDHTLMIVLLISSLVLYIISLM). Over 46 to 59 (LTTKLTHTSTMDAQ) the chain is Mitochondrial matrix. The helical transmembrane segment at 60-87 (EVETIWTILPAIILILIALPSLRILYMM) threads the bilayer. The Mitochondrial intermembrane portion of the chain corresponds to 88-227 (DEINNPSLTV…YFEKWSASML (140 aa)). Cu cation is bound by residues histidine 161, cysteine 196, glutamate 198, cysteine 200, histidine 204, and methionine 207. Residue glutamate 198 coordinates Mg(2+). The residue at position 218 (tyrosine 218) is a Phosphotyrosine.

The protein belongs to the cytochrome c oxidase subunit 2 family. Component of the cytochrome c oxidase (complex IV, CIV), a multisubunit enzyme composed of 14 subunits. The complex is composed of a catalytic core of 3 subunits MT-CO1, MT-CO2 and MT-CO3, encoded in the mitochondrial DNA, and 11 supernumerary subunits COX4I, COX5A, COX5B, COX6A, COX6B, COX6C, COX7A, COX7B, COX7C, COX8 and NDUFA4, which are encoded in the nuclear genome. The complex exists as a monomer or a dimer and forms supercomplexes (SCs) in the inner mitochondrial membrane with NADH-ubiquinone oxidoreductase (complex I, CI) and ubiquinol-cytochrome c oxidoreductase (cytochrome b-c1 complex, complex III, CIII), resulting in different assemblies (supercomplex SCI(1)III(2)IV(1) and megacomplex MCI(2)III(2)IV(2)). Found in a complex with TMEM177, COA6, COX18, COX20, SCO1 and SCO2. Interacts with TMEM177 in a COX20-dependent manner. Interacts with COX20. Interacts with COX16. Cu cation serves as cofactor.

It is found in the mitochondrion inner membrane. The enzyme catalyses 4 Fe(II)-[cytochrome c] + O2 + 8 H(+)(in) = 4 Fe(III)-[cytochrome c] + 2 H2O + 4 H(+)(out). Its function is as follows. Component of the cytochrome c oxidase, the last enzyme in the mitochondrial electron transport chain which drives oxidative phosphorylation. The respiratory chain contains 3 multisubunit complexes succinate dehydrogenase (complex II, CII), ubiquinol-cytochrome c oxidoreductase (cytochrome b-c1 complex, complex III, CIII) and cytochrome c oxidase (complex IV, CIV), that cooperate to transfer electrons derived from NADH and succinate to molecular oxygen, creating an electrochemical gradient over the inner membrane that drives transmembrane transport and the ATP synthase. Cytochrome c oxidase is the component of the respiratory chain that catalyzes the reduction of oxygen to water. Electrons originating from reduced cytochrome c in the intermembrane space (IMS) are transferred via the dinuclear copper A center (CU(A)) of subunit 2 and heme A of subunit 1 to the active site in subunit 1, a binuclear center (BNC) formed by heme A3 and copper B (CU(B)). The BNC reduces molecular oxygen to 2 water molecules using 4 electrons from cytochrome c in the IMS and 4 protons from the mitochondrial matrix. This is Cytochrome c oxidase subunit 2 (MT-CO2) from Bubalus depressicornis (Lowland anoa).